Here is a 546-residue protein sequence, read N- to C-terminus: Chaperonin GroEL (546 aa).

ATP-binding positions include 30 to 33 (TMGP), lysine 51, 87 to 91 (DGTTT), glycine 415, 478 to 480 (NAA), and aspartate 494.

This sequence belongs to the chaperonin (HSP60) family. In terms of assembly, forms a cylinder of 14 subunits composed of two heptameric rings stacked back-to-back. Interacts with the co-chaperonin GroES.

Its subcellular location is the cytoplasm. The catalysed reaction is ATP + H2O + a folded polypeptide = ADP + phosphate + an unfolded polypeptide.. Its function is as follows. Together with its co-chaperonin GroES, plays an essential role in assisting protein folding. The GroEL-GroES system forms a nano-cage that allows encapsulation of the non-native substrate proteins and provides a physical environment optimized to promote and accelerate protein folding. The polypeptide is Chaperonin GroEL (Wolinella succinogenes (strain ATCC 29543 / DSM 1740 / CCUG 13145 / JCM 31913 / LMG 7466 / NCTC 11488 / FDC 602W) (Vibrio succinogenes)).